A 498-amino-acid chain; its full sequence is Neoxanthin synthase, chloroplastic (498 aa).

The N-terminal 42 residues, 1 to 42, are a transit peptide targeting the chloroplast; that stretch reads METLLKPFPSLLLSSPTPYRSIVQQNPSFLSPTTKKKSRKCL.

The protein belongs to the lycopene cyclase family. As to expression, expressed exclusively in chromoplast-containing tissues of flowers and fruits. Expressed in preanthesis flowers.

Its subcellular location is the plastid. The protein resides in the chloroplast. The catalysed reaction is all-trans-violaxanthin = all-trans-neoxanthin. It catalyses the reaction a carotenoid psi-end group = a carotenoid beta-end derivative. The protein operates within carotenoid biosynthesis; neoxanthin biosynthesis. Its pathway is carotenoid biosynthesis; beta-carotene biosynthesis. Its function is as follows. Involved in the synthesis of neoxanthin, the last product of carotenoid synthesis and a precursor of abscisic acid. Involved in the beta-carotene biosynthesis. The protein is Neoxanthin synthase, chloroplastic of Solanum lycopersicum (Tomato).